The sequence spans 215 residues: Pyrrolidone-carboxylate peptidase (215 aa).

Active-site residues include glutamate 78, cysteine 141, and histidine 165.

Belongs to the peptidase C15 family. In terms of assembly, homotetramer.

It localises to the cytoplasm. The enzyme catalyses Release of an N-terminal pyroglutamyl group from a polypeptide, the second amino acid generally not being Pro.. Its function is as follows. Removes 5-oxoproline from various penultimate amino acid residues except L-proline. The protein is Pyrrolidone-carboxylate peptidase of Streptococcus pyogenes serotype M18 (strain MGAS8232).